A 364-amino-acid chain; its full sequence is DNA replication and repair protein RecF (364 aa).

Residue 30–37 coordinates ATP; the sequence is GENGSGKT.

This sequence belongs to the RecF family.

It is found in the cytoplasm. The RecF protein is involved in DNA metabolism; it is required for DNA replication and normal SOS inducibility. RecF binds preferentially to single-stranded, linear DNA. It also seems to bind ATP. This is DNA replication and repair protein RecF from Xylella fastidiosa (strain M12).